The chain runs to 73 residues: UPF0235 protein PERMA_1406 (73 aa).

It belongs to the UPF0235 family.

The sequence is that of UPF0235 protein PERMA_1406 from Persephonella marina (strain DSM 14350 / EX-H1).